The primary structure comprises 458 residues: Probable mitochondrial chaperone BCS1-B (458 aa).

Residues 1-26 are Mitochondrial intermembrane-facing; the sequence is MENVITNNNKGLPKSILKFIPEPIQP. The chain crosses the membrane as a helical span at residues 27-47; that stretch reads LFENPFFSAGFGLIGVGSILA. Topologically, residues 48–458 are mitochondrial matrix; sequence MGRKGFQQAM…INNLNELIKK (411 aa). 248-255 provides a ligand contact to ATP; it reads GPPGTGKS.

Belongs to the AAA ATPase family. BCS1 subfamily.

The protein resides in the mitochondrion inner membrane. It carries out the reaction ATP + H2O = ADP + phosphate + H(+). In terms of biological role, chaperone necessary for the assembly of mitochondrial respiratory chain complex III. In Dictyostelium discoideum (Social amoeba), this protein is Probable mitochondrial chaperone BCS1-B (bcsl1b).